Here is a 348-residue protein sequence, read N- to C-terminus: UPF0283 membrane protein PBPRA2435 (348 aa).

The next 3 helical transmembrane spans lie at 71–91 (GLLI…VVSA), 97–117 (WLAL…ITAL), and 211–231 (EAAV…LVAW).

It belongs to the UPF0283 family.

It localises to the cell inner membrane. This is UPF0283 membrane protein PBPRA2435 from Photobacterium profundum (strain SS9).